Here is a 737-residue protein sequence, read N- to C-terminus: Polyribonucleotide nucleotidyltransferase (737 aa).

Mg(2+) contacts are provided by D489 and D495. Positions 556 to 615 constitute a KH domain; it reads PKIDTIKIDVDKIKIVIGKGGETIDKIIAETGVKIDIDEEGNVSIYSSDQDAINRAKEII. The S1 motif domain occupies 625-693; it reads DEVYRAKVVR…EKGRIDASMK (69 aa). The disordered stretch occupies residues 691–737; the sequence is SMKALLPRPPKPEHDEKGEKSERPHRPRHHKDHKPKKEFTETPKDSE. Over residues 700-714 the composition is skewed to basic and acidic residues; it reads PKPEHDEKGEKSERP. The segment covering 715 to 724 has biased composition (basic residues); that stretch reads HRPRHHKDHK. Positions 725-737 are enriched in basic and acidic residues; the sequence is PKKEFTETPKDSE.

Belongs to the polyribonucleotide nucleotidyltransferase family. Mg(2+) serves as cofactor.

The protein resides in the cytoplasm. It carries out the reaction RNA(n+1) + phosphate = RNA(n) + a ribonucleoside 5'-diphosphate. Its function is as follows. Involved in mRNA degradation. Catalyzes the phosphorolysis of single-stranded polyribonucleotides processively in the 3'- to 5'-direction. This Streptococcus pneumoniae serotype 19F (strain G54) protein is Polyribonucleotide nucleotidyltransferase.